The sequence spans 440 residues: Probable exopolygalacturonase C (440 aa).

Positions Met-1–Gly-21 are cleaved as a signal peptide. N-linked (GlcNAc...) asparagine glycans are attached at residues Asn-84 and Asn-151. 3 PbH1 repeats span residues Gly-188 to Thr-210, Gly-217 to Thr-238, and Ser-240 to Ser-261. Asn-219 carries an N-linked (GlcNAc...) asparagine glycan. Catalysis depends on Asp-231, which acts as the Proton donor. Residue His-255 is part of the active site. Asn-271 carries an N-linked (GlcNAc...) asparagine glycan. The stretch at Ile-272 to Ser-293 is one PbH1 4 repeat. The N-linked (GlcNAc...) asparagine glycan is linked to Asn-313. Residues Cys-389 and Cys-395 are joined by a disulfide bond. Asn-434 carries N-linked (GlcNAc...) asparagine glycosylation.

Belongs to the glycosyl hydrolase 28 family.

The protein localises to the secreted. The catalysed reaction is [(1-&gt;4)-alpha-D-galacturonosyl](n) + H2O = alpha-D-galacturonate + [(1-&gt;4)-alpha-D-galacturonosyl](n-1). Specific in hydrolyzing the terminal glycosidic bond of polygalacturonic acid and oligogalacturonates. In Aspergillus fumigatus (strain ATCC MYA-4609 / CBS 101355 / FGSC A1100 / Af293) (Neosartorya fumigata), this protein is Probable exopolygalacturonase C (pgxC).